The sequence spans 267 residues: Imidazole glycerol phosphate synthase subunit HisF (267 aa).

Catalysis depends on residues aspartate 22 and aspartate 141.

This sequence belongs to the HisA/HisF family. Heterodimer of HisH and HisF.

It is found in the cytoplasm. The catalysed reaction is 5-[(5-phospho-1-deoxy-D-ribulos-1-ylimino)methylamino]-1-(5-phospho-beta-D-ribosyl)imidazole-4-carboxamide + L-glutamine = D-erythro-1-(imidazol-4-yl)glycerol 3-phosphate + 5-amino-1-(5-phospho-beta-D-ribosyl)imidazole-4-carboxamide + L-glutamate + H(+). It functions in the pathway amino-acid biosynthesis; L-histidine biosynthesis; L-histidine from 5-phospho-alpha-D-ribose 1-diphosphate: step 5/9. IGPS catalyzes the conversion of PRFAR and glutamine to IGP, AICAR and glutamate. The HisF subunit catalyzes the cyclization activity that produces IGP and AICAR from PRFAR using the ammonia provided by the HisH subunit. This Mycobacterium tuberculosis (strain ATCC 25177 / H37Ra) protein is Imidazole glycerol phosphate synthase subunit HisF.